Here is a 411-residue protein sequence, read N- to C-terminus: 1-deoxy-D-xylulose 5-phosphate reductoisomerase (411 aa).

NADPH is bound by residues T12, G13, S14, I15, and N127. K128 is a binding site for 1-deoxy-D-xylulose 5-phosphate. E129 lines the NADPH pocket. D153 contributes to the Mn(2+) binding site. 1-deoxy-D-xylulose 5-phosphate contacts are provided by S154, E155, S189, and H212. Residue E155 coordinates Mn(2+). Residue G218 coordinates NADPH. Positions 225, 230, 231, and 234 each coordinate 1-deoxy-D-xylulose 5-phosphate. A Mn(2+)-binding site is contributed by E234.

It belongs to the DXR family. Requires Mg(2+) as cofactor. The cofactor is Mn(2+).

The catalysed reaction is 2-C-methyl-D-erythritol 4-phosphate + NADP(+) = 1-deoxy-D-xylulose 5-phosphate + NADPH + H(+). The protein operates within isoprenoid biosynthesis; isopentenyl diphosphate biosynthesis via DXP pathway; isopentenyl diphosphate from 1-deoxy-D-xylulose 5-phosphate: step 1/6. Catalyzes the NADPH-dependent rearrangement and reduction of 1-deoxy-D-xylulose-5-phosphate (DXP) to 2-C-methyl-D-erythritol 4-phosphate (MEP). The polypeptide is 1-deoxy-D-xylulose 5-phosphate reductoisomerase (Colwellia psychrerythraea (strain 34H / ATCC BAA-681) (Vibrio psychroerythus)).